Consider the following 463-residue polypeptide: Putative F-box protein At3g29830 (463 aa).

An F-box domain is found at arginine 7–serine 55.

The polypeptide is Putative F-box protein At3g29830 (Arabidopsis thaliana (Mouse-ear cress)).